Consider the following 637-residue polypeptide: Probable potassium transport system protein Kup (637 aa).

Helical transmembrane passes span 24–44 (LAIAAIGVVFGDIGTSPLYAL), 64–84 (VISLLFWAIILVVGIKYLLFV), 113–133 (AGALMALGIFGACMFYGDAVI), 151–171 (PHLSHLVLPITIVILIALFWI), 182–202 (LFGPIMVVWFIVIAALGVYHI), 225–245 (LLQAYVVLGSVVLVLTGAEAL), 261–281 (AYGLVMPSLVLNYFGQGALLI), 290–310 (PFFLLAPEWGLLPLVVLSTVA), 351–371 (IYVPVVNWLLLFVILCIVIGF), 381–401 (YGIAVTATMVITTVLACVVMV), 409–429 (LLVGAIIAVFLAIDLGFFGAN), and 433–453 (VAQGGWLPLGIGALLFFLLMT).

The protein belongs to the HAK/KUP transporter (TC 2.A.72) family.

Its subcellular location is the cell inner membrane. It catalyses the reaction K(+)(in) + H(+)(in) = K(+)(out) + H(+)(out). Functionally, transport of potassium into the cell. Likely operates as a K(+):H(+) symporter. The chain is Probable potassium transport system protein Kup from Burkholderia ambifaria (strain ATCC BAA-244 / DSM 16087 / CCUG 44356 / LMG 19182 / AMMD) (Burkholderia cepacia (strain AMMD)).